Consider the following 450-residue polypeptide: UDP-N-acetylmuramoylalanine--D-glutamate ligase (450 aa).

Residue 115-121 (GTNGKTT) participates in ATP binding.

This sequence belongs to the MurCDEF family.

It is found in the cytoplasm. The catalysed reaction is UDP-N-acetyl-alpha-D-muramoyl-L-alanine + D-glutamate + ATP = UDP-N-acetyl-alpha-D-muramoyl-L-alanyl-D-glutamate + ADP + phosphate + H(+). The protein operates within cell wall biogenesis; peptidoglycan biosynthesis. Cell wall formation. Catalyzes the addition of glutamate to the nucleotide precursor UDP-N-acetylmuramoyl-L-alanine (UMA). The polypeptide is UDP-N-acetylmuramoylalanine--D-glutamate ligase (Caldanaerobacter subterraneus subsp. tengcongensis (strain DSM 15242 / JCM 11007 / NBRC 100824 / MB4) (Thermoanaerobacter tengcongensis)).